Here is a 256-residue protein sequence, read N- to C-terminus: MLNLPRLLYPLYERRLLKELNGARQPGHVAIMCDGNRRWAREAGFVDLSHGHRVGAKKIGELVRWCDDVDVDLVTVYLLSTENLGRDEAELQLLYDIIGDVVAELSLPETNCRVRLVGHLDLLPKEFAERLRGTVCETVDHTGVAVNIAVGYGGRQEIVDAVRDLLTSARDEGKTLDEVIESVDAQAISTHLYTSGQPDPDLVIRTSGEQRLSGFMLWQSAYSEIWFTDTYWPAFRRIDFLRALRDYSQRSRRFGK.

The active site involves Asp-34. Asp-34 lines the Mg(2+) pocket. Substrate-binding positions include 35–38 (GNRR), Trp-39, His-52, and 80–82 (STE). The active-site Proton acceptor is the Asn-83. Residues Arg-86, Arg-205, and 211–213 (RLS) each bind substrate. Glu-224 lines the Mg(2+) pocket.

The protein belongs to the UPP synthase family. In terms of assembly, homodimer. Mg(2+) serves as cofactor.

In terms of biological role, catalyzes the condensation of isopentenyl diphosphate (IPP) with allylic pyrophosphates generating different type of terpenoids. The polypeptide is Isoprenyl transferase 1 (Corynebacterium efficiens (strain DSM 44549 / YS-314 / AJ 12310 / JCM 11189 / NBRC 100395)).